We begin with the raw amino-acid sequence, 373 residues long: S-adenosylmethionine:tRNA ribosyltransferase-isomerase (373 aa).

This sequence belongs to the QueA family. Monomer.

Its subcellular location is the cytoplasm. The catalysed reaction is 7-aminomethyl-7-carbaguanosine(34) in tRNA + S-adenosyl-L-methionine = epoxyqueuosine(34) in tRNA + adenine + L-methionine + 2 H(+). It functions in the pathway tRNA modification; tRNA-queuosine biosynthesis. In terms of biological role, transfers and isomerizes the ribose moiety from AdoMet to the 7-aminomethyl group of 7-deazaguanine (preQ1-tRNA) to give epoxyqueuosine (oQ-tRNA). The protein is S-adenosylmethionine:tRNA ribosyltransferase-isomerase of Prochlorococcus marinus (strain MIT 9515).